Consider the following 117-residue polypeptide: Immunoglobulin lambda variable 2 (117 aa).

The signal sequence occupies residues methionine 1–serine 19. Glutamine 20 is subject to Pyrrolidone carboxylic acid. The region spanning glutamine 20–phenylalanine 117 is the Ig-like domain.

The sequence is that of Immunoglobulin lambda variable 2 from Mus musculus (Mouse).